Consider the following 78-residue polypeptide: NAD(P)H-quinone oxidoreductase subunit L (78 aa).

2 consecutive transmembrane segments (helical) span residues 10 to 30 (IILIIYAALAGAYFLVMPAIV) and 47 to 67 (VFMYFLMFLFFPGMLVLSPFL).

It belongs to the complex I NdhL subunit family. In terms of assembly, NDH-1 can be composed of about 15 different subunits; different subcomplexes with different compositions have been identified which probably have different functions.

Its subcellular location is the cellular thylakoid membrane. The catalysed reaction is a plastoquinone + NADH + (n+1) H(+)(in) = a plastoquinol + NAD(+) + n H(+)(out). It carries out the reaction a plastoquinone + NADPH + (n+1) H(+)(in) = a plastoquinol + NADP(+) + n H(+)(out). Its function is as follows. NDH-1 shuttles electrons from an unknown electron donor, via FMN and iron-sulfur (Fe-S) centers, to quinones in the respiratory and/or the photosynthetic chain. The immediate electron acceptor for the enzyme in this species is believed to be plastoquinone. Couples the redox reaction to proton translocation, and thus conserves the redox energy in a proton gradient. Cyanobacterial NDH-1 also plays a role in inorganic carbon-concentration. This Trichodesmium erythraeum (strain IMS101) protein is NAD(P)H-quinone oxidoreductase subunit L.